Consider the following 250-residue polypeptide: tRNA (guanine-N(1)-)-methyltransferase (250 aa).

S-adenosyl-L-methionine is bound by residues glycine 116 and 136 to 141; that span reads IGDYVL.

The protein belongs to the RNA methyltransferase TrmD family. In terms of assembly, homodimer.

The protein resides in the cytoplasm. It catalyses the reaction guanosine(37) in tRNA + S-adenosyl-L-methionine = N(1)-methylguanosine(37) in tRNA + S-adenosyl-L-homocysteine + H(+). Its function is as follows. Specifically methylates guanosine-37 in various tRNAs. This Pseudomonas putida (strain ATCC 47054 / DSM 6125 / CFBP 8728 / NCIMB 11950 / KT2440) protein is tRNA (guanine-N(1)-)-methyltransferase.